The following is a 110-amino-acid chain: MLEKTTRMNYLFDFYQSLLTQKQRSYMSLYYLDDLSLGEIAEEFDVSRQAVYDNIKRTEAMLEEYEEKLVLLQKFQERQRLVAKLKQLISEEEHVNEEMKQVVEAIEKLD.

This sequence belongs to the UPF0122 family.

In terms of biological role, might take part in the signal recognition particle (SRP) pathway. This is inferred from the conservation of its genetic proximity to ftsY/ffh. May be a regulatory protein. This chain is UPF0122 protein BCAH187_A3894, found in Bacillus cereus (strain AH187).